A 363-amino-acid polypeptide reads, in one-letter code: Copper-containing nitrite reductase (363 aa).

The signal sequence occupies residues 1–24 (MSVFRSVLGACVLLGSCASSLALA). Plastocyanin-like domains follow at residues 25-193 (GGAE…YDRV) and 194-363 (YTIG…EPKQ). The Cu cation site is built by H113, H118, H153, C154, H163, M168, and H324.

It belongs to the multicopper oxidase family. As to quaternary structure, homotrimer. Cu(2+) serves as cofactor. Requires Cu(+) as cofactor. It depends on FAD as a cofactor.

The protein localises to the periplasm. The enzyme catalyses nitric oxide + Fe(III)-[cytochrome c] + H2O = Fe(II)-[cytochrome c] + nitrite + 2 H(+). It functions in the pathway nitrogen metabolism; nitrate reduction (denitrification); dinitrogen from nitrate: step 2/4. The sequence is that of Copper-containing nitrite reductase (nirK) from Pseudomonas chlororaphis (Pseudomonas aureofaciens).